The sequence spans 385 residues: Cell division protein FtsZ (385 aa).

GTP-binding positions include 20–24 (GGGGN), 107–109 (GTG), glutamate 138, arginine 142, and asparagine 186.

Belongs to the FtsZ family. Homodimer. Polymerizes to form a dynamic ring structure in a strictly GTP-dependent manner. Interacts directly with several other division proteins.

It localises to the cytoplasm. In terms of biological role, essential cell division protein that forms a contractile ring structure (Z ring) at the future cell division site. The regulation of the ring assembly controls the timing and the location of cell division. One of the functions of the FtsZ ring is to recruit other cell division proteins to the septum to produce a new cell wall between the dividing cells. Binds GTP and shows GTPase activity. The polypeptide is Cell division protein FtsZ (Buchnera aphidicola subsp. Baizongia pistaciae (strain Bp)).